Consider the following 560-residue polypeptide: Oxygen-dependent choline dehydrogenase (560 aa).

6–35 serves as a coordination point for FAD; that stretch reads DYIIIGGGSAGSVLGGRLSEDVSNNVLVLE. The Proton acceptor role is filled by H472.

Belongs to the GMC oxidoreductase family. It depends on FAD as a cofactor.

The enzyme catalyses choline + A = betaine aldehyde + AH2. The catalysed reaction is betaine aldehyde + NAD(+) + H2O = glycine betaine + NADH + 2 H(+). Its pathway is amine and polyamine biosynthesis; betaine biosynthesis via choline pathway; betaine aldehyde from choline (cytochrome c reductase route): step 1/1. Functionally, involved in the biosynthesis of the osmoprotectant glycine betaine. Catalyzes the oxidation of choline to betaine aldehyde and betaine aldehyde to glycine betaine at the same rate. The chain is Oxygen-dependent choline dehydrogenase from Staphylococcus xylosus.